The following is a 361-amino-acid chain: Peptide chain release factor 1 (361 aa).

Gln237 carries the post-translational modification N5-methylglutamine. The segment covering 287-297 has biased composition (basic and acidic residues); the sequence is KQQKEQSDTRK. Residues 287–313 form a disordered region; that stretch reads KQQKEQSDTRKSLVGSGDRSERIRTYN.

The protein belongs to the prokaryotic/mitochondrial release factor family. Post-translationally, methylated by PrmC. Methylation increases the termination efficiency of RF1.

The protein localises to the cytoplasm. In terms of biological role, peptide chain release factor 1 directs the termination of translation in response to the peptide chain termination codons UAG and UAA. The protein is Peptide chain release factor 1 of Francisella tularensis subsp. novicida (strain U112).